Reading from the N-terminus, the 189-residue chain is Glycerol-3-phosphate acyltransferase (189 aa).

5 helical membrane passes run 1–21 (MFWL…AIVL), 50–70 (KLAI…VLLA), 77–97 (LHAQ…PLYF), 111–131 (MLMG…LLTF), and 151–171 (LLAW…VMIV).

This sequence belongs to the PlsY family. In terms of assembly, probably interacts with PlsX.

Its subcellular location is the cell inner membrane. The catalysed reaction is an acyl phosphate + sn-glycerol 3-phosphate = a 1-acyl-sn-glycero-3-phosphate + phosphate. The protein operates within lipid metabolism; phospholipid metabolism. In terms of biological role, catalyzes the transfer of an acyl group from acyl-phosphate (acyl-PO(4)) to glycerol-3-phosphate (G3P) to form lysophosphatidic acid (LPA). This enzyme utilizes acyl-phosphate as fatty acyl donor, but not acyl-CoA or acyl-ACP. This Pseudomonas putida (strain ATCC 700007 / DSM 6899 / JCM 31910 / BCRC 17059 / LMG 24140 / F1) protein is Glycerol-3-phosphate acyltransferase.